The sequence spans 78 residues: uncharacterized protein (78 aa).

This is an uncharacterized protein from Escherichia coli O6:H1 (strain CFT073 / ATCC 700928 / UPEC).